Consider the following 310-residue polypeptide: Beta-ketoacyl-[acyl-carrier-protein] synthase III 1 (310 aa).

Residues C112 and H235 contribute to the active site. An ACP-binding region spans residues 236-240; sequence QANIR. N265 is a catalytic residue.

This sequence belongs to the thiolase-like superfamily. FabH family. In terms of assembly, homodimer.

It localises to the cytoplasm. The enzyme catalyses malonyl-[ACP] + acetyl-CoA + H(+) = 3-oxobutanoyl-[ACP] + CO2 + CoA. The protein operates within lipid metabolism; fatty acid biosynthesis. Catalyzes the condensation reaction of fatty acid synthesis by the addition to an acyl acceptor of two carbons from malonyl-ACP. Catalyzes the first condensation reaction which initiates fatty acid synthesis and may therefore play a role in governing the total rate of fatty acid production. Possesses both acetoacetyl-ACP synthase and acetyl transacylase activities. Its substrate specificity determines the biosynthesis of branched-chain and/or straight-chain of fatty acids. In Bacillus anthracis, this protein is Beta-ketoacyl-[acyl-carrier-protein] synthase III 1.